The following is a 326-amino-acid chain: Biotin synthase (326 aa).

Positions 51 to 278 constitute a Radical SAM core domain; that stretch reads NEVQRSTLLS…TSYVRLSAGR (228 aa). C66, C70, and C73 together coordinate [4Fe-4S] cluster. [2Fe-2S] cluster contacts are provided by C110, C141, C201, and R273.

The protein belongs to the radical SAM superfamily. Biotin synthase family. Homodimer. It depends on [4Fe-4S] cluster as a cofactor. The cofactor is [2Fe-2S] cluster.

It carries out the reaction (4R,5S)-dethiobiotin + (sulfur carrier)-SH + 2 reduced [2Fe-2S]-[ferredoxin] + 2 S-adenosyl-L-methionine = (sulfur carrier)-H + biotin + 2 5'-deoxyadenosine + 2 L-methionine + 2 oxidized [2Fe-2S]-[ferredoxin]. The protein operates within cofactor biosynthesis; biotin biosynthesis; biotin from 7,8-diaminononanoate: step 2/2. In terms of biological role, catalyzes the conversion of dethiobiotin (DTB) to biotin by the insertion of a sulfur atom into dethiobiotin via a radical-based mechanism. The chain is Biotin synthase from Azoarcus sp. (strain BH72).